The chain runs to 256 residues: 1-(5-phosphoribosyl)-5-[(5-phosphoribosylamino)methylideneamino] imidazole-4-carboxamide isomerase (256 aa).

Aspartate 8 (proton acceptor) is an active-site residue. The Proton donor role is filled by aspartate 129.

This sequence belongs to the HisA/HisF family.

The protein localises to the cytoplasm. The catalysed reaction is 1-(5-phospho-beta-D-ribosyl)-5-[(5-phospho-beta-D-ribosylamino)methylideneamino]imidazole-4-carboxamide = 5-[(5-phospho-1-deoxy-D-ribulos-1-ylimino)methylamino]-1-(5-phospho-beta-D-ribosyl)imidazole-4-carboxamide. The protein operates within amino-acid biosynthesis; L-histidine biosynthesis; L-histidine from 5-phospho-alpha-D-ribose 1-diphosphate: step 4/9. In Syntrophobacter fumaroxidans (strain DSM 10017 / MPOB), this protein is 1-(5-phosphoribosyl)-5-[(5-phosphoribosylamino)methylideneamino] imidazole-4-carboxamide isomerase.